The primary structure comprises 542 residues: Organic anion transporter 3 (542 aa).

Over 1–9 the chain is Cytoplasmic; the sequence is MTFSEILDR. The residue at position 4 (Ser4) is a Phosphoserine. Residues 10–30 traverse the membrane as a helical segment; that stretch reads VGSMGHFQFLHVAILGLPILN. At 31 to 123 the chain is on the extracellular side; sequence MANHNLLQIF…LVCNSNKLKE (93 aa). Residues Asn86 and Asn102 are each glycosylated (N-linked (GlcNAc...) asparagine). The helical transmembrane segment at 124-144 threads the bilayer; the sequence is MAQSIFMAGILIGGLVLGDLS. At 145-154 the chain is on the cytoplasmic side; sequence DRFGRRPILT. Residues 155 to 175 form a helical membrane-spanning segment; that stretch reads CSYLLLAASGSGAAFSPTFPI. Position 176 (Tyr176) is a topological domain, extracellular. A helical transmembrane segment spans residues 177–197; sequence MVFRFLCGFGISGITLSTVIL. Residues 198 to 212 are Cytoplasmic-facing; the sequence is NVEWVPTRMRAIMST. Residues 213–233 traverse the membrane as a helical segment; sequence ALGYCYTFGQFILPGLAYAIP. The Extracellular segment spans residues 234–236; sequence QWR. A helical membrane pass occupies residues 237–257; that stretch reads WLQLTVSIPFFVFFLSSWWTP. The Cytoplasmic segment spans residues 258 to 327; sequence ESIRWLVLSG…FRIPMLRRMT (70 aa). A helical membrane pass occupies residues 328–348; it reads FCLSLAWFATGFAYYSLAMGV. Residues 349–354 are Extracellular-facing; it reads EEFGVN. The helical transmembrane segment at 355-375 threads the bilayer; the sequence is LYILQIIFGGVDVPAKFITIL. The Cytoplasmic portion of the chain corresponds to 376 to 386; sequence SLSYLGRHTTQ. A helical transmembrane segment spans residues 387 to 407; the sequence is AAALLLAGGAILALTFVPLDL. Residues 408-411 lie on the Extracellular side of the membrane; it reads QTVR. Residues 412-432 traverse the membrane as a helical segment; it reads TVLAVFGKGCLSSSFSCLFLY. Over 433–471 the chain is Cytoplasmic; sequence TSELYPTVIRQTGMGVSNLWTRVGSMVSPLVKITGEVQP. The helical transmembrane segment at 472-492 threads the bilayer; the sequence is FIPNIIYGITALLGGSAALFL. Over 493-542 the chain is Extracellular; it reads PETLNQPLPETIEDLENWSLRAKKPKQEPEVEKASQRIPLQPHGPGLGSS. The disordered stretch occupies residues 515-542; it reads KKPKQEPEVEKASQRIPLQPHGPGLGSS. Basic and acidic residues predominate over residues 517 to 527; it reads PKQEPEVEKAS.

It belongs to the major facilitator (TC 2.A.1) superfamily. Organic cation transporter (TC 2.A.1.19) family. In terms of tissue distribution, strongly expressed in kidney. Weaker expression in brain and skeletal muscle. Expressed in adrenal glands.

The protein localises to the basolateral cell membrane. It carries out the reaction estrone 3-sulfate(out) + glutarate(in) = estrone 3-sulfate(in) + glutarate(out). The catalysed reaction is estrone 3-sulfate(in) + 2-oxoglutarate(out) = estrone 3-sulfate(out) + 2-oxoglutarate(in). It catalyses the reaction glutarate(in) + 2-oxoglutarate(out) = glutarate(out) + 2-oxoglutarate(in). The enzyme catalyses urate(in) + 2-oxoglutarate(out) = urate(out) + 2-oxoglutarate(in). It carries out the reaction taurocholate(out) + glutarate(in) = taurocholate(in) + glutarate(out). The catalysed reaction is dehydroepiandrosterone 3-sulfate(out) + glutarate(in) = dehydroepiandrosterone 3-sulfate(in) + glutarate(out). It catalyses the reaction prostaglandin F2alpha(out) + glutarate(in) = prostaglandin F2alpha(in) + glutarate(out). The enzyme catalyses prostaglandin F2alpha(out) + 2-oxoglutarate(in) = prostaglandin F2alpha(in) + 2-oxoglutarate(out). It carries out the reaction (R)-carnitine(out) + 2-oxoglutarate(in) = (R)-carnitine(in) + 2-oxoglutarate(out). The catalysed reaction is glutarate(in) + (R)-carnitine(out) = glutarate(out) + (R)-carnitine(in). It catalyses the reaction prostaglandin E2(out) + 2-oxoglutarate(in) = prostaglandin E2(in) + 2-oxoglutarate(out). The enzyme catalyses prostaglandin E2(out) + glutarate(in) = prostaglandin E2(in) + glutarate(out). It carries out the reaction urate(in) + glutarate(out) = urate(out) + glutarate(in). The catalysed reaction is taurocholate(out) + 2-oxoglutarate(in) = taurocholate(in) + 2-oxoglutarate(out). It catalyses the reaction dehydroepiandrosterone 3-sulfate(out) + 2-oxoglutarate(in) = dehydroepiandrosterone 3-sulfate(in) + 2-oxoglutarate(out). The enzyme catalyses kynurenate(out) + a dicarboxylate(in) = kynurenate(in) + a dicarboxylate(out). It carries out the reaction (indol-3-yl)acetate(out) + a dicarboxylate(in) = (indol-3-yl)acetate(in) + a dicarboxylate(out). The catalysed reaction is indoxyl sulfate(out) + a dicarboxylate(in) = indoxyl sulfate(in) + a dicarboxylate(out). It catalyses the reaction N-benzoylglycine(out) + a dicarboxylate(in) = N-benzoylglycine(in) + a dicarboxylate(out). The enzyme catalyses 3-carboxy-4-methyl-5-propyl-2-furanpropanoate(out) + a dicarboxylate(in) = 3-carboxy-4-methyl-5-propyl-2-furanpropanoate(in) + a dicarboxylate(out). It carries out the reaction (6R)-L-erythro-5,6,7,8-tetrahydrobiopterin(out) + a dicarboxylate(in) = (6R)-L-erythro-5,6,7,8-tetrahydrobiopterin(in) + a dicarboxylate(out). The catalysed reaction is L-erythro-7,8-dihydrobiopterin(out) + a dicarboxylate(in) = L-erythro-7,8-dihydrobiopterin(in) + a dicarboxylate(out). It catalyses the reaction L-sepiapterin(out) + a dicarboxylate(in) = L-sepiapterin(in) + a dicarboxylate(out). In terms of biological role, functions as an organic anion/dicarboxylate exchanger that couples organic anion uptake indirectly to the sodium gradient. Transports organic anions such as estrone 3-sulfate (E1S) and urate in exchange for dicarboxylates such as glutarate or ketoglutarate (2-oxoglutarate). Plays an important role in the excretion of endogenous and exogenous organic anions, especially from the kidney and the brain. E1S transport is pH- and chloride-dependent and may also involve E1S/cGMP exchange. Responsible for the transport of prostaglandin E2 (PGE2) and prostaglandin F2(alpha) (PGF2(alpha)) in the basolateral side of the renal tubule. Involved in the transport of neuroactive tryptophan metabolites kynurenate and xanthurenate. Functions as a biopterin transporters involved in the uptake and the secretion of coenzymes tetrahydrobiopterin (BH4), dihydrobiopterin (BH2) and sepiapterin to urine, thereby determining baseline levels of blood biopterins. May be involved in the basolateral transport of steviol, a metabolite of the popular sugar substitute stevioside. May participate in the detoxification/ renal excretion of drugs and xenobiotics, such as the histamine H(2)-receptor antagonists fexofenadine and cimetidine, the antibiotic benzylpenicillin (PCG), the anionic herbicide 2,4-dichloro-phenoxyacetate (2,4-D), the diagnostic agent p-aminohippurate (PAH), the antiviral acyclovir (ACV), and the mycotoxin ochratoxin (OTA), by transporting these exogenous organic anions across the cell membrane in exchange for dicarboxylates such as 2-oxoglutarate. Contributes to the renal uptake of potent uremic toxins (indoxyl sulfate (IS), indole acetate (IA), hippurate/N-benzoylglycine (HA) and 3-carboxy-4-methyl-5-propyl-2-furanpropionate (CMPF)), pravastatin, PCG, E1S and dehydroepiandrosterone sulfate (DHEAS), and is partly involved in the renal uptake of temocaprilat (an angiotensin-converting enzyme (ACE) inhibitor). May contribute to the release of cortisol in the adrenals. Involved in one of the detoxification systems on the choroid plexus (CP), removes substrates such as E1S or taurocholate (TC), PCG, 2,4-D and PAH, from the cerebrospinal fluid (CSF) to the blood for eventual excretion in urine and bile. Also contributes to the uptake of several other organic compounds such as the prostanoids prostaglandin E(2) and prostaglandin F(2-alpha), L-carnitine, and the therapeutic drugs allopurinol, 6-mercaptopurine (6-MP) and 5-fluorouracil (5-FU). Mediates the transport of PAH, PCG, and the statins pravastatin and pitavastatin, from the cerebrum into the blood circulation across the blood-brain barrier (BBB). In summary, plays a role in the efflux of drugs and xenobiotics, helping reduce their undesired toxicological effects on the body. This is Organic anion transporter 3 from Homo sapiens (Human).